We begin with the raw amino-acid sequence, 351 residues long: Homeobox protein rough sheath 1 (351 aa).

Disordered stretches follow at residues 1–23 (MDQS…NSKA), 57–82 (AAAP…GAEM), and 187–229 (GGGS…PRAE). The segment covering 57–68 (AAAPSSSQQHQQ) has biased composition (low complexity). Basic and acidic residues predominate over residues 214–229 (PNGRENDPPEIDPRAE). Residues 232 to 252 (ELKYQLLKKYSGYLSSLRQEF) enclose the ELK domain. Positions 253-316 (SKKKKKGKLP…NQRKRHWKPS (64 aa)) form a DNA-binding region, homeobox; TALE-type.

The protein belongs to the TALE/KNOX homeobox family.

The protein resides in the nucleus. Plays a possible role in patterning the placement of lateral organs along the axis of the shoot. Mutations in RS1 alters cell fate and causes unregulated cell division and expansion in the leaf. Probably binds to the DNA sequence 5'-TGAC-3'. The polypeptide is Homeobox protein rough sheath 1 (RS1) (Zea mays (Maize)).